A 652-amino-acid chain; its full sequence is MYLSRQLRLLPRANIACSLSSSGAHYTTAAPAEDAPIEIPNRIERSPTDLLQALASTVARDYTAPHYKYHDDPFLIPMSNAAKRTYAMSKESGRKAAKWIKEEHRELFMHQEAQPAIEKFAPSMVYTEDSVVDETSLAQLISQGELKDAVLVYNLLEQKGNPISPELKQSLLELVCFHNNQEPIPEEYIEERWFLQNNKRRERSGKTWKDGDLAEKLYSEIEPKTPQSYASLIRGMAKYLQCERAYALLQEAGEKQVQLDTNTFNSVIEIVSFLKDTAEQRWQLCKDLLNEMSQQKLRPNLGTLNAVLQCISTFGNFKVARAAALQALPEFKQLGVNPSLGSYYYLLIIFCRERGPVSHVIVDILNDISGKEFQIQHPKDTYFFATAMDVCRNHLHDKSLAKKVDELLHTGKNYDLVGDSFKESIYYRNYLALLCQTESTEDFMLSYDLLVPNIYIPEPGIMEEILRAIEINGAVEYVPRLWSDMVVFDHTHRESLLLYVLRILVDNKPNPDSPAQAQLPEQGAKVALDMFERVEEAIKRLRKVSFTGQMLGDILTLLVRGGSYEKATEVFAHIDKNQHRIPGTPSLNALIEFVDASVQEKSPSQALFALQYAVENNFDSRELAKRIHEGFTLNETHLSKLKSLVGESFLDK.

Residues 1-37 (MYLSRQLRLLPRANIACSLSSSGAHYTTAAPAEDAPI) constitute a mitochondrion transit peptide. PPR repeat units follow at residues 129-163 (DSVV…GNPI), 225-259 (TPQS…QVQL), 260-299 (DTNT…KLRP), 300-338 (NLGT…GVNP), and 547-581 (TGQM…QHRI).

Belongs to the mitochondrion-specific ribosomal protein mS39 family.

It localises to the mitochondrion. Functionally, mitochondrial protein that may have a role in mitochondrial translation. Essential for larval development. This chain is Small ribosomal subunit protein mS39, found in Drosophila melanogaster (Fruit fly).